The chain runs to 157 residues: uncharacterized protein (157 aa).

Residues 9–154 enclose the N-acetyltransferase domain; the sequence is LLINYKTLDE…ETNLNAVTNE (146 aa).

This is an uncharacterized protein from Bacillus cereus (strain B4264).